A 466-amino-acid chain; its full sequence is Histidine--tRNA ligase (466 aa).

It belongs to the class-II aminoacyl-tRNA synthetase family. In terms of assembly, homodimer.

It localises to the cytoplasm. The catalysed reaction is tRNA(His) + L-histidine + ATP = L-histidyl-tRNA(His) + AMP + diphosphate + H(+). In Bifidobacterium longum (strain NCC 2705), this protein is Histidine--tRNA ligase (hisS).